The following is a 107-amino-acid chain: Pre-mRNA-splicing factor RDS3 (107 aa).

This sequence belongs to the PHF5 family. Component of the spliceosome where it interacts with CUS1, HSH49, HSH155, IST3 and RSE1. Also interacts with YRA1.

It is found in the nucleus. Its function is as follows. Required for pre-mRNA splicing. Involved in regulation of drug sensitivity and may play a role in multidrug resistance. The polypeptide is Pre-mRNA-splicing factor RDS3 (RDS3) (Saccharomyces cerevisiae (strain ATCC 204508 / S288c) (Baker's yeast)).